The sequence spans 537 residues: [Pyruvate dehydrogenase [acetyl-transferring]]-phosphatase 1, mitochondrial (537 aa).

Residues 1-71 (MPAPTQLFFP…WWQYTQGRRY (71 aa)) constitute a mitochondrion transit peptide. The PPM-type phosphatase domain maps to 109–525 (ILGFDSNQLP…DDITIIVVQF (417 aa)). Residues D144 and G145 each coordinate Mn(2+). K202 is modified (N6-acetyllysine). The Mn(2+) site is built by D418 and D516.

Belongs to the PP2C family. In terms of assembly, heterodimer of a catalytic (PDP1) and a regulatory (PDPR) subunit. It depends on Mn(2+) as a cofactor. Mg(2+) is required as a cofactor.

The protein resides in the mitochondrion. It catalyses the reaction O-phospho-L-seryl-[pyruvate dehydrogenase E1 alpha subunit] + H2O = L-seryl-[pyruvate dehydrogenase E1 alpha subunit] + phosphate. Its activity is regulated as follows. Magnesium-dependent and calcium-stimulated. PDP1 activity strongly depends on its Ca(2+)-dependent binding to the lipoyl domain of E2 subunit of component of the pyruvate dehydrogenase complex. In terms of biological role, mitochondrial enzyme that catalyzes the dephosphorylation and concomitant reactivation of the alpha subunit of the E1 component of the pyruvate dehydrogenase complex (PDC), thereby stimulating the conversion of pyruvate into acetyl-CoA. This Homo sapiens (Human) protein is [Pyruvate dehydrogenase [acetyl-transferring]]-phosphatase 1, mitochondrial.